The sequence spans 362 residues: Probable prephenate dehydrogenase NovF (362 aa).

In terms of domain architecture, Prephenate/arogenate dehydrogenase spans 2 to 283 (RTAVIIGTGM…GIDGSNRVPG (282 aa)).

It belongs to the prephenate/arogenate dehydrogenase family.

It catalyses the reaction prephenate + NAD(+) = 3-(4-hydroxyphenyl)pyruvate + CO2 + NADH. It participates in antibiotic biosynthesis; novobiocin biosynthesis. Probable prephenate dehydrogenase that produces 4-hydroxyphenylpyruvate (4HPP) in the novobiocin biosynthesis pathway. Novobiocin is an aminocoumarin family antibiotic that targets bacterial DNA gyrases. In Streptomyces niveus (Streptomyces spheroides), this protein is Probable prephenate dehydrogenase NovF (novF).